The chain runs to 156 residues: Small ribosomal subunit protein uS7 (156 aa).

Belongs to the universal ribosomal protein uS7 family. In terms of assembly, part of the 30S ribosomal subunit. Contacts proteins S9 and S11.

In terms of biological role, one of the primary rRNA binding proteins, it binds directly to 16S rRNA where it nucleates assembly of the head domain of the 30S subunit. Is located at the subunit interface close to the decoding center, probably blocks exit of the E-site tRNA. The sequence is that of Small ribosomal subunit protein uS7 from Onion yellows phytoplasma (strain OY-M).